The sequence spans 524 residues: Probable pectinesterase/pectinesterase inhibitor 19 (524 aa).

Positions 1–22 (MLVKVFSFFILMITMVVIGVSK) are cleaved as a signal peptide. Residues 23–172 (EYCDDKQSCQ…ISRARIALAL (150 aa)) are pectinesterase inhibitor 19. Residues 215–510 (DVVVAKDGTG…FTVAKLLDGE (296 aa)) form a pectinesterase 19 region. Residues Asn265 and Asn281 are each glycosylated (N-linked (GlcNAc...) asparagine). Thr290 contacts substrate. The Proton donor; for pectinesterase activity role is filled by Asp343. A disulfide bridge links Cys357 with Cys377. The Nucleophile; for pectinesterase activity role is filled by Asp364. The N-linked (GlcNAc...) asparagine glycan is linked to Asn412. Positions 430 and 432 each coordinate substrate.

The protein in the N-terminal section; belongs to the PMEI family. In the C-terminal section; belongs to the pectinesterase family. Expressed in siliques, but not in flower buds.

It is found in the secreted. It localises to the cell wall. The catalysed reaction is [(1-&gt;4)-alpha-D-galacturonosyl methyl ester](n) + n H2O = [(1-&gt;4)-alpha-D-galacturonosyl](n) + n methanol + n H(+). It functions in the pathway glycan metabolism; pectin degradation; 2-dehydro-3-deoxy-D-gluconate from pectin: step 1/5. In terms of biological role, acts in the modification of cell walls via demethylesterification of cell wall pectin. The protein is Probable pectinesterase/pectinesterase inhibitor 19 (PME19) of Arabidopsis thaliana (Mouse-ear cress).